The following is a 257-amino-acid chain: Ribonuclease HII (257 aa).

Positions 72 to 257 (ERVAGIDEVG…FSPVQKILQA (186 aa)) constitute an RNase H type-2 domain. A divalent metal cation-binding residues include aspartate 78, glutamate 79, and aspartate 170.

This sequence belongs to the RNase HII family. The cofactor is Mn(2+). Requires Mg(2+) as cofactor.

The protein resides in the cytoplasm. It carries out the reaction Endonucleolytic cleavage to 5'-phosphomonoester.. Functionally, endonuclease that specifically degrades the RNA of RNA-DNA hybrids. This chain is Ribonuclease HII, found in Levilactobacillus brevis (strain ATCC 367 / BCRC 12310 / CIP 105137 / JCM 1170 / LMG 11437 / NCIMB 947 / NCTC 947) (Lactobacillus brevis).